A 315-amino-acid polypeptide reads, in one-letter code: Olfactory receptor 2T5 (315 aa).

At 1-29 (MANITRMANHTGKLDFILMGLFRRSKHPA) the chain is on the extracellular side. N3 and N9 each carry an N-linked (GlcNAc...) asparagine glycan. The helical transmembrane segment at 30-53 (LLSVVIFVVFLKALSGNAVLILLI) threads the bilayer. Residues 54–61 (HCDAHLHS) lie on the Cytoplasmic side of the membrane. A helical transmembrane segment spans residues 62–83 (PMYFFISQLSLMDMAYISVTVP). The Extracellular segment spans residues 84-104 (KMLLDQVMGVNKVSAPECGMQ). C101 and C193 are disulfide-bonded. Residues 105–124 (MFLYLTLAGSEFFLLATMAY) form a helical membrane-spanning segment. At 125 to 143 (DRYVAICHPLRYPVLMNHR) the chain is on the cytoplasmic side. A helical transmembrane segment spans residues 144–162 (VCLFLASGCWFLGSVDGFM). Residues 163–199 (LTPITMSFPFCRSWEIHHFFCEVPAVTILSCSDTSLY) lie on the Extracellular side of the membrane. Residues 200 to 223 (ETLMYLCCVLMLLIPVTIISSSYL) form a helical membrane-spanning segment. The Cytoplasmic portion of the chain corresponds to 224-240 (LILLTVHRMNSAEGRKK). Residues 241 to 263 (AFATCSSHLTVVILFYGAAVYTY) form a helical membrane-spanning segment. The Extracellular portion of the chain corresponds to 264-276 (MLPSSYHTPEKDM). Residues 277-296 (MVSVFYTILTPVLNPLIYSL) form a helical membrane-spanning segment. Over 297 to 315 (RNKDVMGALKKMLTVRFVL) the chain is Cytoplasmic.

This sequence belongs to the G-protein coupled receptor 1 family.

The protein localises to the cell membrane. Odorant receptor. The protein is Olfactory receptor 2T5 (OR2T5) of Homo sapiens (Human).